Consider the following 221-residue polypeptide: Ribosomal RNA small subunit methyltransferase G 3 (221 aa).

S-adenosyl-L-methionine-binding positions include G85, F90, 136–137, and R150; that span reads IE.

It belongs to the methyltransferase superfamily. RNA methyltransferase RsmG family.

The protein localises to the cytoplasm. The enzyme catalyses guanosine(527) in 16S rRNA + S-adenosyl-L-methionine = N(7)-methylguanosine(527) in 16S rRNA + S-adenosyl-L-homocysteine. Its function is as follows. Specifically methylates the N7 position of guanine in position 527 of 16S rRNA. The sequence is that of Ribosomal RNA small subunit methyltransferase G 3 from Bdellovibrio bacteriovorus (strain ATCC 15356 / DSM 50701 / NCIMB 9529 / HD100).